The chain runs to 921 residues: Isoleucine--tRNA ligase 1 (921 aa).

The 'HIGH' region motif lies at 57–67 (PYANGDIHMGH). Glutamate 552 is an L-isoleucyl-5'-AMP binding site. Positions 593–597 (KMSKS) match the 'KMSKS' region motif. An ATP-binding site is contributed by lysine 596. Zn(2+) is bound by residues cysteine 888, cysteine 891, cysteine 908, and cysteine 911.

The protein belongs to the class-I aminoacyl-tRNA synthetase family. IleS type 1 subfamily. As to quaternary structure, monomer. Zn(2+) serves as cofactor.

It is found in the cytoplasm. The enzyme catalyses tRNA(Ile) + L-isoleucine + ATP = L-isoleucyl-tRNA(Ile) + AMP + diphosphate. Its function is as follows. Catalyzes the attachment of isoleucine to tRNA(Ile). As IleRS can inadvertently accommodate and process structurally similar amino acids such as valine, to avoid such errors it has two additional distinct tRNA(Ile)-dependent editing activities. One activity is designated as 'pretransfer' editing and involves the hydrolysis of activated Val-AMP. The other activity is designated 'posttransfer' editing and involves deacylation of mischarged Val-tRNA(Ile). The sequence is that of Isoleucine--tRNA ligase 1 from Bacillus cereus (strain ATCC 10987 / NRS 248).